A 424-amino-acid chain; its full sequence is Serine--tRNA ligase (424 aa).

229 to 231 serves as a coordination point for L-serine; sequence TAE. Position 260-262 (260-262) interacts with ATP; the sequence is RSE. E283 is a binding site for L-serine. 347-350 contributes to the ATP binding site; the sequence is EISS. S383 serves as a coordination point for L-serine.

It belongs to the class-II aminoacyl-tRNA synthetase family. Type-1 seryl-tRNA synthetase subfamily. As to quaternary structure, homodimer. The tRNA molecule binds across the dimer.

Its subcellular location is the cytoplasm. The enzyme catalyses tRNA(Ser) + L-serine + ATP = L-seryl-tRNA(Ser) + AMP + diphosphate + H(+). The catalysed reaction is tRNA(Sec) + L-serine + ATP = L-seryl-tRNA(Sec) + AMP + diphosphate + H(+). Its pathway is aminoacyl-tRNA biosynthesis; selenocysteinyl-tRNA(Sec) biosynthesis; L-seryl-tRNA(Sec) from L-serine and tRNA(Sec): step 1/1. In terms of biological role, catalyzes the attachment of serine to tRNA(Ser). Is also able to aminoacylate tRNA(Sec) with serine, to form the misacylated tRNA L-seryl-tRNA(Sec), which will be further converted into selenocysteinyl-tRNA(Sec). This Gluconacetobacter diazotrophicus (strain ATCC 49037 / DSM 5601 / CCUG 37298 / CIP 103539 / LMG 7603 / PAl5) protein is Serine--tRNA ligase.